A 148-amino-acid chain; its full sequence is Aspartate 1-decarboxylase (148 aa).

The active-site Schiff-base intermediate with substrate; via pyruvic acid is the Ser25. Position 25 is a pyruvic acid (Ser) (Ser25). Thr57 contributes to the substrate binding site. Tyr58 functions as the Proton donor in the catalytic mechanism. Substrate is bound at residue 73 to 75; sequence GAA.

The protein belongs to the PanD family. In terms of assembly, heterooctamer of four alpha and four beta subunits. The cofactor is pyruvate. In terms of processing, is synthesized initially as an inactive proenzyme, which is activated by self-cleavage at a specific serine bond to produce a beta-subunit with a hydroxyl group at its C-terminus and an alpha-subunit with a pyruvoyl group at its N-terminus.

The protein localises to the cytoplasm. It carries out the reaction L-aspartate + H(+) = beta-alanine + CO2. It participates in cofactor biosynthesis; (R)-pantothenate biosynthesis; beta-alanine from L-aspartate: step 1/1. Functionally, catalyzes the pyruvoyl-dependent decarboxylation of aspartate to produce beta-alanine. The protein is Aspartate 1-decarboxylase of Rhodococcus erythropolis (strain PR4 / NBRC 100887).